The chain runs to 317 residues: Ribosomal lysine N-methyltransferase 5 (317 aa).

Residues Trp-87, 141–143, Asp-163, Trp-214, and Leu-237 contribute to the S-adenosyl-L-methionine site; that span reads GSG.

This sequence belongs to the class I-like SAM-binding methyltransferase superfamily. RKM5 family.

Its function is as follows. S-adenosyl-L-methionine-dependent protein-lysine N-methyltransferase that methylates 60S ribosomal protein L1. In Eremothecium gossypii (strain ATCC 10895 / CBS 109.51 / FGSC 9923 / NRRL Y-1056) (Yeast), this protein is Ribosomal lysine N-methyltransferase 5 (RKM5).